A 144-amino-acid polypeptide reads, in one-letter code: Aspartate carbamoyltransferase regulatory chain (144 aa).

4 residues coordinate Zn(2+): cysteine 103, cysteine 108, cysteine 132, and cysteine 135.

Belongs to the PyrI family. Contains catalytic and regulatory chains. It depends on Zn(2+) as a cofactor.

Involved in allosteric regulation of aspartate carbamoyltransferase. This Clostridium tetani (strain Massachusetts / E88) protein is Aspartate carbamoyltransferase regulatory chain.